The sequence spans 595 residues: Sulfite reductase [NADPH] flavoprotein alpha-component (595 aa).

The Flavodoxin-like domain maps to 59–197 (ITVLSASQTG…KADIWRREIV (139 aa)). FMN-binding positions include 65–70 (SQTGNA), 112–115 (STQG), and 148–157 (LGDSSYTYFA). Residues 230–444 (EEPFTAHLVV…IEHNDNFRLP (215 aa)) enclose the FAD-binding FR-type domain. FAD is bound by residues threonine 318, phenylalanine 352, 382-385 (RLYS), 400-402 (TVS), tyrosine 406, and 415-418 (GGAS). NADP(+) is bound by residues 515 to 516 (SQ), 521 to 525 (KIYVQ), and aspartate 557. FAD is bound at residue tyrosine 595.

Belongs to the NADPH-dependent sulphite reductase flavoprotein subunit CysJ family. The protein in the N-terminal section; belongs to the flavodoxin family. It in the C-terminal section; belongs to the flavoprotein pyridine nucleotide cytochrome reductase family. In terms of assembly, alpha(8)-beta(8). The alpha component is a flavoprotein, the beta component is a hemoprotein. FAD serves as cofactor. Requires FMN as cofactor.

It catalyses the reaction hydrogen sulfide + 3 NADP(+) + 3 H2O = sulfite + 3 NADPH + 4 H(+). The protein operates within sulfur metabolism; hydrogen sulfide biosynthesis; hydrogen sulfide from sulfite (NADPH route): step 1/1. Its function is as follows. Component of the sulfite reductase complex that catalyzes the 6-electron reduction of sulfite to sulfide. This is one of several activities required for the biosynthesis of L-cysteine from sulfate. The flavoprotein component catalyzes the electron flow from NADPH -&gt; FAD -&gt; FMN to the hemoprotein component. This Baumannia cicadellinicola subsp. Homalodisca coagulata protein is Sulfite reductase [NADPH] flavoprotein alpha-component.